The sequence spans 577 residues: Arginine--tRNA ligase (577 aa).

The 'HIGH' region motif lies at 122-132 (PNVAKEMHVGH).

This sequence belongs to the class-I aminoacyl-tRNA synthetase family. Monomer.

The protein resides in the cytoplasm. It carries out the reaction tRNA(Arg) + L-arginine + ATP = L-arginyl-tRNA(Arg) + AMP + diphosphate. The protein is Arginine--tRNA ligase of Salmonella paratyphi B (strain ATCC BAA-1250 / SPB7).